A 290-amino-acid chain; its full sequence is Nucleotide-binding protein BAV3158 (290 aa).

Residue 9 to 16 (GISGSGKS) participates in ATP binding. Position 58–61 (58–61 (DVRS)) interacts with GTP.

Belongs to the RapZ-like family.

Functionally, displays ATPase and GTPase activities. This chain is Nucleotide-binding protein BAV3158, found in Bordetella avium (strain 197N).